The following is a 343-amino-acid chain: DNA-directed RNA polymerase subunit alpha (343 aa).

The alpha N-terminal domain (alpha-NTD) stretch occupies residues 1–239 (MGETVTIQKN…DQLNVFVNFE (239 aa)). The tract at residues 255 to 343 (FNPAFLKKVD…ELAKRFEDHY (89 aa)) is alpha C-terminal domain (alpha-CTD).

The protein belongs to the RNA polymerase alpha chain family. As to quaternary structure, homodimer. The RNAP catalytic core consists of 2 alpha, 1 beta, 1 beta' and 1 omega subunit. When a sigma factor is associated with the core the holoenzyme is formed, which can initiate transcription.

It carries out the reaction RNA(n) + a ribonucleoside 5'-triphosphate = RNA(n+1) + diphosphate. Functionally, DNA-dependent RNA polymerase catalyzes the transcription of DNA into RNA using the four ribonucleoside triphosphates as substrates. In Bradyrhizobium sp. (strain BTAi1 / ATCC BAA-1182), this protein is DNA-directed RNA polymerase subunit alpha.